The sequence spans 225 residues: uncharacterized protein (225 aa).

A helical transmembrane segment spans residues 2–22; that stretch reads TIFYLVFIAVIIIIILYVLYL. Asn73 carries an N-linked (GlcNAc...) asparagine; by host glycan. A coiled-coil region spans residues 114-146; sequence DYEDNYFNSNWNLKQLKNQLENLLREKNYKMVL. Residue Asn222 is glycosylated (N-linked (GlcNAc...) asparagine; by host).

The protein resides in the membrane. This is an uncharacterized protein from Acanthamoeba polyphaga (Amoeba).